A 141-amino-acid chain; its full sequence is ATP synthase epsilon chain (141 aa).

The protein belongs to the ATPase epsilon chain family. F-type ATPases have 2 components, CF(1) - the catalytic core - and CF(0) - the membrane proton channel. CF(1) has five subunits: alpha(3), beta(3), gamma(1), delta(1), epsilon(1). CF(0) has three main subunits: a, b and c.

The protein resides in the cell inner membrane. Its function is as follows. Produces ATP from ADP in the presence of a proton gradient across the membrane. The polypeptide is ATP synthase epsilon chain (Pseudomonas aeruginosa (strain LESB58)).